The following is a 242-amino-acid chain: ATP synthase subunit a (242 aa).

The next 6 membrane-spanning stretches (helical) occupy residues 29–49, 84–104, 114–134, 140–160, 181–201, and 203–223; these read SSIY…LAFY, FIPL…LGMT, IIVT…VGFV, FLTL…IIVI, MAGH…MIYL, and FLPI…AILQ.

This sequence belongs to the ATPase A chain family. As to quaternary structure, F-type ATPases have 2 components, CF(1) - the catalytic core - and CF(0) - the membrane proton channel. CF(1) has five subunits: alpha(3), beta(3), gamma(1), delta(1), epsilon(1). CF(0) has three main subunits: a(1), b(2) and c(9-12). The alpha and beta chains form an alternating ring which encloses part of the gamma chain. CF(1) is attached to CF(0) by a central stalk formed by the gamma and epsilon chains, while a peripheral stalk is formed by the delta and b chains.

The protein localises to the cell inner membrane. Functionally, key component of the proton channel; it plays a direct role in the translocation of protons across the membrane. This chain is ATP synthase subunit a, found in Rickettsia peacockii (strain Rustic).